We begin with the raw amino-acid sequence, 322 residues long: Phosphatidylserine decarboxylase proenzyme (322 aa).

Residues D90, H147, and S254 each act as charge relay system; for autoendoproteolytic cleavage activity in the active site. S254 functions as the Schiff-base intermediate with substrate; via pyruvic acid; for decarboxylase activity in the catalytic mechanism. Position 254 is a pyruvic acid (Ser); by autocatalysis (S254). The disordered stretch occupies residues 297–322 (PAPLPAEEIKAEHDASPLVDNKKDDT). The segment covering 303–322 (EEIKAEHDASPLVDNKKDDT) has biased composition (basic and acidic residues).

It belongs to the phosphatidylserine decarboxylase family. PSD-B subfamily. Prokaryotic type I sub-subfamily. Heterodimer of a large membrane-associated beta subunit and a small pyruvoyl-containing alpha subunit. The cofactor is pyruvate. Is synthesized initially as an inactive proenzyme. Formation of the active enzyme involves a self-maturation process in which the active site pyruvoyl group is generated from an internal serine residue via an autocatalytic post-translational modification. Two non-identical subunits are generated from the proenzyme in this reaction, and the pyruvate is formed at the N-terminus of the alpha chain, which is derived from the carboxyl end of the proenzyme. The autoendoproteolytic cleavage occurs by a canonical serine protease mechanism, in which the side chain hydroxyl group of the serine supplies its oxygen atom to form the C-terminus of the beta chain, while the remainder of the serine residue undergoes an oxidative deamination to produce ammonia and the pyruvoyl prosthetic group on the alpha chain. During this reaction, the Ser that is part of the protease active site of the proenzyme becomes the pyruvoyl prosthetic group, which constitutes an essential element of the active site of the mature decarboxylase.

Its subcellular location is the cell membrane. The enzyme catalyses a 1,2-diacyl-sn-glycero-3-phospho-L-serine + H(+) = a 1,2-diacyl-sn-glycero-3-phosphoethanolamine + CO2. The protein operates within phospholipid metabolism; phosphatidylethanolamine biosynthesis; phosphatidylethanolamine from CDP-diacylglycerol: step 2/2. Its function is as follows. Catalyzes the formation of phosphatidylethanolamine (PtdEtn) from phosphatidylserine (PtdSer). This Salmonella typhi protein is Phosphatidylserine decarboxylase proenzyme.